Consider the following 426-residue polypeptide: Enolase (426 aa).

(2R)-2-phosphoglycerate is bound at residue Q163. Residue E205 is the Proton donor of the active site. Residues D242, E285, and D312 each coordinate Mg(2+). Residues K337, R366, S367, and K388 each coordinate (2R)-2-phosphoglycerate. K337 functions as the Proton acceptor in the catalytic mechanism.

The protein belongs to the enolase family. Mg(2+) is required as a cofactor.

The protein resides in the cytoplasm. Its subcellular location is the secreted. It localises to the cell surface. It catalyses the reaction (2R)-2-phosphoglycerate = phosphoenolpyruvate + H2O. It functions in the pathway carbohydrate degradation; glycolysis; pyruvate from D-glyceraldehyde 3-phosphate: step 4/5. Its function is as follows. Catalyzes the reversible conversion of 2-phosphoglycerate (2-PG) into phosphoenolpyruvate (PEP). It is essential for the degradation of carbohydrates via glycolysis. The protein is Enolase of Gluconobacter oxydans (strain 621H) (Gluconobacter suboxydans).